The following is a 368-amino-acid chain: Probable dual-specificity RNA methyltransferase RlmN (368 aa).

Glu-100 serves as the catalytic Proton acceptor. Positions 106–344 (QHYGLSVCVT…CVVRQEHGTD (239 aa)) constitute a Radical SAM core domain. Cys-113 and Cys-349 are disulfide-bonded. [4Fe-4S] cluster contacts are provided by Cys-120, Cys-124, and Cys-127. Residues 172–173 (GE), Ser-204, 227–229 (SLH), and Asn-305 each bind S-adenosyl-L-methionine. Residue Cys-349 is the S-methylcysteine intermediate of the active site.

It belongs to the radical SAM superfamily. RlmN family. The cofactor is [4Fe-4S] cluster.

The protein resides in the cytoplasm. It catalyses the reaction adenosine(2503) in 23S rRNA + 2 reduced [2Fe-2S]-[ferredoxin] + 2 S-adenosyl-L-methionine = 2-methyladenosine(2503) in 23S rRNA + 5'-deoxyadenosine + L-methionine + 2 oxidized [2Fe-2S]-[ferredoxin] + S-adenosyl-L-homocysteine. It carries out the reaction adenosine(37) in tRNA + 2 reduced [2Fe-2S]-[ferredoxin] + 2 S-adenosyl-L-methionine = 2-methyladenosine(37) in tRNA + 5'-deoxyadenosine + L-methionine + 2 oxidized [2Fe-2S]-[ferredoxin] + S-adenosyl-L-homocysteine. Functionally, specifically methylates position 2 of adenine 2503 in 23S rRNA and position 2 of adenine 37 in tRNAs. The polypeptide is Probable dual-specificity RNA methyltransferase RlmN (Streptococcus agalactiae serotype V (strain ATCC BAA-611 / 2603 V/R)).